A 32-amino-acid chain; its full sequence is Peptide II.10.10 (32 aa).

3 disulfide bridges follow: Cys-5–Cys-24, Cys-10–Cys-29, and Cys-14–Cys-31.

It belongs to the short scorpion toxin superfamily. Potassium channel inhibitor family. Alpha-KTx 10 subfamily. Expressed by the venom gland.

The protein localises to the secreted. This chain is Peptide II.10.10, found in Centruroides tecomanus (Scorpion).